A 193-amino-acid polypeptide reads, in one-letter code: Thioredoxin reductase-like selenoprotein T1a (193 aa).

An N-terminal signal peptide occupies residues 1-21 (MRWLPFSALLLWALCLHSASA). Residues 44 to 47 (CVSU) constitute a cross-link (cysteinyl-selenocysteine (Cys-Sec)). A non-standard amino acid (selenocysteine) is located at residue Sec-47. The helical transmembrane segment at 83 to 101 (IASFLSMFKLLLIGVIILG) threads the bilayer.

It belongs to the SelWTH family. Selenoprotein T subfamily. Post-translationally, may contain a selenide-sulfide bond between Cys-44 and Sec-47. This bond is speculated to serve as redox-active pair. Expressed in embryonic olfactory vesicles and the photoreceptor cell layer of the embryonic retina. Low level in embryonic epiphysis.

Its subcellular location is the endoplasmic reticulum membrane. The enzyme catalyses [thioredoxin]-dithiol + NADP(+) = [thioredoxin]-disulfide + NADPH + H(+). Functionally, selenoprotein with thioredoxin reductase-like oxidoreductase activity. The sequence is that of Thioredoxin reductase-like selenoprotein T1a from Danio rerio (Zebrafish).